We begin with the raw amino-acid sequence, 312 residues long: Isochorismatase (312 aa).

In terms of domain architecture, Carrier spans 229–302 (VFTCENIRKQ…EWQKLLTTRS (74 aa)). Ser263 carries the O-(pantetheine 4'-phosphoryl)serine modification.

It belongs to the isochorismatase family.

It carries out the reaction isochorismate + H2O = (2S,3S)-2,3-dihydroxy-2,3-dihydrobenzoate + pyruvate. It participates in siderophore biosynthesis; bacillibactin biosynthesis. The protein is Isochorismatase (dhbB) of Bacillus subtilis (strain 168).